The sequence spans 197 residues: Large ribosomal subunit protein bL25 (197 aa).

Belongs to the bacterial ribosomal protein bL25 family. CTC subfamily. As to quaternary structure, part of the 50S ribosomal subunit; part of the 5S rRNA/L5/L18/L25 subcomplex. Contacts the 5S rRNA. Binds to the 5S rRNA independently of L5 and L18.

Its function is as follows. This is one of the proteins that binds to the 5S RNA in the ribosome where it forms part of the central protuberance. The sequence is that of Large ribosomal subunit protein bL25 from Pseudomonas putida (strain ATCC 700007 / DSM 6899 / JCM 31910 / BCRC 17059 / LMG 24140 / F1).